A 339-amino-acid polypeptide reads, in one-letter code: Dipeptide transport system permease protein DppB (339 aa).

Residues 1 to 9 are Periplasmic-facing; the sequence is MLQFILRRL. The chain crosses the membrane as a helical span at residues 10–30; that stretch reads GLVIPTFIGITLLTFAFVHMI. At 31–102 the chain is on the cytoplasmic side; that stretch reads PGDPVMIMAG…VPRFQATLEL (72 aa). The ABC transmembrane type-1 domain occupies 96 to 328; sequence FQATLELGVC…LVNLLVDLLY (233 aa). Residues 103–123 traverse the membrane as a helical segment; it reads GVCAMIFATAVGIPVGVLAAV. The Periplasmic segment spans residues 124-135; that stretch reads KRGSIFDHTAVG. The helical transmembrane segment at 136–156 threads the bilayer; that stretch reads LALTGYSMPIFWWGMMLIMLV. Topologically, residues 157-171 are cytoplasmic; sequence SVHWNLTPVSGRVSD. Residues 172-192 form a helical membrane-spanning segment; it reads MVFLDDSNPLTGFMLIDTAIW. The Periplasmic portion of the chain corresponds to 193–200; it reads GEDGNFID. Residues 201-221 form a helical membrane-spanning segment; it reads AVAHMILPAIVLGTIPLAVIV. Residues 222–259 are Cytoplasmic-facing; the sequence is RMTRSSMLEVLGEDYIRTARAKGLTRMRVIIVHALRNA. The helical transmembrane segment at 260–280 threads the bilayer; the sequence is MLPVVTVIGLQVGTLLAGAIL. The Periplasmic segment spans residues 281-309; sequence TETIFSWPGLGRWLIDALQRRDYPVVQGG. Residues 310–330 traverse the membrane as a helical segment; sequence VLLVATMIILVNLLVDLLYGV. At 331 to 339 the chain is on the cytoplasmic side; the sequence is VNPRIRHKK.

The protein belongs to the binding-protein-dependent transport system permease family. OppBC subfamily. As to quaternary structure, the complex is composed of two ATP-binding proteins (DppD and DppF), two transmembrane proteins (DppB and DppC) and a solute-binding protein (DppA).

It localises to the cell inner membrane. In terms of biological role, part of the ABC transporter DppABCDF involved in dipeptide transport. Responsible for the translocation of the substrate across the membrane. The chain is Dipeptide transport system permease protein DppB (dppB) from Escherichia coli O157:H7.